Consider the following 253-residue polypeptide: Probable U3 small nucleolar RNA-associated protein 11 (253 aa).

Residues 1–21 (MAAAFRKAVKSRQREYRERSQ) form a disordered region. Residues Lys-74, Lys-83, and Lys-86 each participate in a glycyl lysine isopeptide (Lys-Gly) (interchain with G-Cter in SUMO2) cross-link. Thr-90 bears the Phosphothreonine mark. Glycyl lysine isopeptide (Lys-Gly) (interchain with G-Cter in SUMO2) cross-links involve residues Lys-103, Lys-120, Lys-143, Lys-144, Lys-180, Lys-211, Lys-218, Lys-235, and Lys-236. Ser-241 carries the post-translational modification Phosphoserine. Residue Lys-246 forms a Glycyl lysine isopeptide (Lys-Gly) (interchain with G-Cter in SUMO2) linkage.

Belongs to the UTP11 family. Part of the small subunit (SSU) processome, composed of more than 70 proteins and the RNA chaperone small nucleolar RNA (snoRNA) U3.

The protein resides in the nucleus. The protein localises to the nucleolus. Its function is as follows. Part of the small subunit (SSU) processome, first precursor of the small eukaryotic ribosomal subunit. During the assembly of the SSU processome in the nucleolus, many ribosome biogenesis factors, an RNA chaperone and ribosomal proteins associate with the nascent pre-rRNA and work in concert to generate RNA folding, modifications, rearrangements and cleavage as well as targeted degradation of pre-ribosomal RNA by the RNA exosome. Involved in nucleolar processing of pre-18S ribosomal RNA. In Rattus norvegicus (Rat), this protein is Probable U3 small nucleolar RNA-associated protein 11.